The primary structure comprises 248 residues: tRNA pseudouridine synthase A (248 aa).

The active-site Nucleophile is D53. Y111 contacts substrate.

This sequence belongs to the tRNA pseudouridine synthase TruA family. Homodimer.

The enzyme catalyses uridine(38/39/40) in tRNA = pseudouridine(38/39/40) in tRNA. Its function is as follows. Formation of pseudouridine at positions 38, 39 and 40 in the anticodon stem and loop of transfer RNAs. The chain is tRNA pseudouridine synthase A from Listeria innocua serovar 6a (strain ATCC BAA-680 / CLIP 11262).